Here is a 261-residue protein sequence, read N- to C-terminus: Ribosomal RNA large subunit methyltransferase E (261 aa).

The S-adenosyl-L-methionine site is built by G81, W83, D104, D120, and D144. The active-site Proton acceptor is the K184. Positions 233 to 261 (GNALGHEVEDDGPMPHDPREDATADEDQD) are disordered. Over residues 245-254 (PMPHDPREDA) the composition is skewed to basic and acidic residues.

The protein belongs to the class I-like SAM-binding methyltransferase superfamily. RNA methyltransferase RlmE family.

The protein localises to the cytoplasm. The enzyme catalyses uridine(2552) in 23S rRNA + S-adenosyl-L-methionine = 2'-O-methyluridine(2552) in 23S rRNA + S-adenosyl-L-homocysteine + H(+). Functionally, specifically methylates the uridine in position 2552 of 23S rRNA at the 2'-O position of the ribose in the fully assembled 50S ribosomal subunit. The sequence is that of Ribosomal RNA large subunit methyltransferase E from Allorhizobium ampelinum (strain ATCC BAA-846 / DSM 112012 / S4) (Agrobacterium vitis (strain S4)).